The primary structure comprises 305 residues: Aurasperone B biosynthesis cluster protein A (305 aa).

A signal peptide spans 1-26 (MSIFFSIRFWPAAISAAILWLPQVLG). N-linked (GlcNAc...) asparagine glycosylation is found at Asn-29, Asn-34, Asn-64, Asn-83, Asn-132, Asn-183, Asn-218, and Asn-288.

Belongs to the bfoA family.

Its function is as follows. Part of the gene cluster that mediates the biosynthesis of aurasperone B, a dimeric gamma-naphthopyrone. The first step in the biosynthesis of aurasperone B is the production of gamma-naphthopyrone precursor YWA1 by the non-reducing polyketide synthase albA, via condensation of one acetyl-CoA starter unit with 6 malonyl-CoA units. YWA1 is then methylated by aunE at position C-6 to yield foncesin which is further methylated at position C-8 by aunD to produce fonsecin B. A key enzyme in the biosynthetic pathway is the cytochrome P450 monooxygenase aunB which catalyzes the oxidative dimerization of fonsecin B to aurasperone B. AunB also catalyzes the oxidative dimerization of rubrofusarin B into aurasperone A. This is Aurasperone B biosynthesis cluster protein A from Aspergillus niger (strain ATCC MYA-4892 / CBS 513.88 / FGSC A1513).